The chain runs to 213 residues: Transcription antitermination protein NusB (213 aa).

This sequence belongs to the NusB family.

In terms of biological role, involved in transcription antitermination. Required for transcription of ribosomal RNA (rRNA) genes. Binds specifically to the boxA antiterminator sequence of the ribosomal RNA (rrn) operons. The polypeptide is Transcription antitermination protein NusB (Nostoc punctiforme (strain ATCC 29133 / PCC 73102)).